The chain runs to 527 residues: DNA polymerase epsilon subunit 2 (527 aa).

It belongs to the DNA polymerase epsilon subunit B family. Component of the DNA polymerase epsilon complex consisting of four subunits: the catalytic subunit POLE and the accessory subunits POLE2, POLE3 and POLE4.

Its subcellular location is the nucleus. Its function is as follows. Accessory component of the DNA polymerase epsilon complex. Participates in DNA repair and in chromosomal DNA replication. The sequence is that of DNA polymerase epsilon subunit 2 (POLE2) from Bos taurus (Bovine).